The following is an 820-amino-acid chain: Scavenger receptor class F member 1 (820 aa).

A signal peptide spans 1–23 (MLAAMGLELVFSLLLLWTQGTQG). Residues 24-422 (STLDPAGQHV…TCQLGRHGKN (399 aa)) are Extracellular-facing. 4 consecutive EGF-like domains span residues 56-90 (TIPI…AQCS), 98-133 (WGHD…RLCE), 163-193 (RRPC…RRCS), and 217-251 (WGPE…IRCE). Cystine bridges form between Cys60–Cys72, Cys66–Cys78, Cys80–Cys89, Cys102–Cys114, Cys108–Cys121, Cys123–Cys132, Cys166–Cys174, Cys168–Cys181, Cys183–Cys192, Cys221–Cys232, Cys225–Cys239, and Cys241–Cys250. Asn291 is a glycosylation site (N-linked (GlcNAc...) asparagine). EGF-like domains lie at 304–341 (FGER…HRCE) and 353–384 (CSST…TSCN). The chain crosses the membrane as a helical span at residues 423 to 443 (ALIVGILVPLLLLLMGIVCCA). Residues 444–820 (YCCSGTRLDP…VVPMSVPPQH (377 aa)) lie on the Cytoplasmic side of the membrane. 2 disordered regions span residues 549 to 685 (PMAQ…IQES) and 715 to 820 (NYQK…PPQH). Phosphoserine is present on residues Ser590 and Ser607. Residues 631 to 648 (QEAEESTGPEQVNTEEDA) are compositionally biased toward acidic residues. Residues 650–662 (TATSSGDPATSHG) are compositionally biased toward polar residues.

In terms of assembly, heterophilic interaction with SREC2 via its extracellular domain. The heterophilic interaction is suppressed by the presence of ligand such as Ac-LDL. Interacts with AVIL; the interaction occurs in embryonic dorsal root ganglions at 18 dpc and induces neurite-like outgrowth. In terms of tissue distribution, expressed weakly in brain, spinal cord and dorsal root ganglions.

It localises to the membrane. Mediates the binding and degradation of acetylated low density lipoprotein (Ac-LDL). Mediates heterophilic interactions, suggesting a function as adhesion protein. Plays a role in the regulation of neurite-like outgrowth. The polypeptide is Scavenger receptor class F member 1 (Scarf1) (Mus musculus (Mouse)).